The primary structure comprises 919 residues: Isoleucine--tRNA ligase (919 aa).

The 'HIGH' region signature appears at proline 57–threonine 67. Glutamate 553 lines the L-isoleucyl-5'-AMP pocket. Residues lysine 594 to serine 598 carry the 'KMSKS' region motif. Residue lysine 597 participates in ATP binding. Zn(2+) contacts are provided by cysteine 887, cysteine 890, cysteine 907, and cysteine 910.

This sequence belongs to the class-I aminoacyl-tRNA synthetase family. IleS type 1 subfamily. As to quaternary structure, monomer. The cofactor is Zn(2+).

It localises to the cytoplasm. The catalysed reaction is tRNA(Ile) + L-isoleucine + ATP = L-isoleucyl-tRNA(Ile) + AMP + diphosphate. Functionally, catalyzes the attachment of isoleucine to tRNA(Ile). As IleRS can inadvertently accommodate and process structurally similar amino acids such as valine, to avoid such errors it has two additional distinct tRNA(Ile)-dependent editing activities. One activity is designated as 'pretransfer' editing and involves the hydrolysis of activated Val-AMP. The other activity is designated 'posttransfer' editing and involves deacylation of mischarged Val-tRNA(Ile). The polypeptide is Isoleucine--tRNA ligase (Thermotoga petrophila (strain ATCC BAA-488 / DSM 13995 / JCM 10881 / RKU-1)).